The following is a 331-amino-acid chain: Protein-methionine-sulfoxide reductase catalytic subunit MsrP (331 aa).

The tat-type signal signal peptide spans 1–57; the sequence is MLIKKTLRAALAGDDIPRSEITPRAVFEHRRRILQAAGAAAAGGLVGAHGLALAAYA. Mo-molybdopterin is bound by residues N90, 93-94, C148, T183, N231, R236, and 247-249; these read YE and SAK.

Belongs to the MsrP family. In terms of assembly, heterodimer of a catalytic subunit (MsrP) and a heme-binding subunit (MsrQ). It depends on Mo-molybdopterin as a cofactor. In terms of processing, predicted to be exported by the Tat system. The position of the signal peptide cleavage has not been experimentally proven.

It is found in the periplasm. It carries out the reaction L-methionyl-[protein] + a quinone + H2O = L-methionyl-(S)-S-oxide-[protein] + a quinol. The catalysed reaction is L-methionyl-[protein] + a quinone + H2O = L-methionyl-(R)-S-oxide-[protein] + a quinol. Part of the MsrPQ system that repairs oxidized periplasmic proteins containing methionine sulfoxide residues (Met-O), using respiratory chain electrons. Thus protects these proteins from oxidative-stress damage caused by reactive species of oxygen and chlorine generated by the host defense mechanisms. MsrPQ is essential for the maintenance of envelope integrity under bleach stress, rescuing a wide series of structurally unrelated periplasmic proteins from methionine oxidation. The catalytic subunit MsrP is non-stereospecific, being able to reduce both (R-) and (S-) diastereoisomers of methionine sulfoxide. The chain is Protein-methionine-sulfoxide reductase catalytic subunit MsrP from Burkholderia mallei (strain ATCC 23344).